The primary structure comprises 329 residues: Ribosomal protein L11 methyltransferase (329 aa).

The S-adenosyl-L-methionine site is built by threonine 177, glycine 198, aspartate 220, and asparagine 264.

The protein belongs to the methyltransferase superfamily. PrmA family.

Its subcellular location is the cytoplasm. The catalysed reaction is L-lysyl-[protein] + 3 S-adenosyl-L-methionine = N(6),N(6),N(6)-trimethyl-L-lysyl-[protein] + 3 S-adenosyl-L-homocysteine + 3 H(+). Functionally, methylates ribosomal protein L11. The protein is Ribosomal protein L11 methyltransferase of Helicobacter pylori (strain HPAG1).